The following is a 416-amino-acid chain: Ribosome biogenesis protein WDR12 homolog (416 aa).

A ubiquitin-like (UBL) domain region spans residues 7–89; it reads VQVRFFTKQK…ESVVEIEYLE (83 aa). 7 WD repeats span residues 101 to 138, 140 to 184, 189 to 228, 259 to 297, 299 to 338, 344 to 384, and 388 to 416; these read VHDD…LAKV, GHTS…ASCV, GHTQ…EGGD, GHTQ…NKQT, TGSK…GQVV, SHQG…TPLY, and GHQD…LILY. The tract at residues 226–245 is disordered; it reads GGDEGENGSLSKKQKTTGVK.

The protein belongs to the WD repeat WDR12/YTM1 family.

It localises to the nucleus. The protein resides in the nucleolus. It is found in the nucleoplasm. Its function is as follows. Required for maturation of ribosomal RNAs and formation of the large ribosomal subunit. The protein is Ribosome biogenesis protein WDR12 homolog of Nematostella vectensis (Starlet sea anemone).